A 90-amino-acid polypeptide reads, in one-letter code: Acylphosphatase (90 aa).

Residues 3-90 (RYSAIVQGRV…DGEKKFSIKY (88 aa)) enclose the Acylphosphatase-like domain. Residues Arg-18 and Asn-36 contribute to the active site.

This sequence belongs to the acylphosphatase family.

The enzyme catalyses an acyl phosphate + H2O = a carboxylate + phosphate + H(+). The protein is Acylphosphatase (acyP) of Clostridium beijerinckii (strain ATCC 51743 / NCIMB 8052) (Clostridium acetobutylicum).